The following is a 204-amino-acid chain: Glycerol-3-phosphate acyltransferase (204 aa).

5 consecutive transmembrane segments (helical) span residues Ile8–Phe28, Val53–Ala73, Phe81–Gly101, Phe116–Ile136, and Val155–Leu175.

The protein belongs to the PlsY family. Probably interacts with PlsX.

It localises to the cell inner membrane. The enzyme catalyses an acyl phosphate + sn-glycerol 3-phosphate = a 1-acyl-sn-glycero-3-phosphate + phosphate. It functions in the pathway lipid metabolism; phospholipid metabolism. Catalyzes the transfer of an acyl group from acyl-phosphate (acyl-PO(4)) to glycerol-3-phosphate (G3P) to form lysophosphatidic acid (LPA). This enzyme utilizes acyl-phosphate as fatty acyl donor, but not acyl-CoA or acyl-ACP. In Francisella tularensis subsp. tularensis (strain FSC 198), this protein is Glycerol-3-phosphate acyltransferase.